Consider the following 168-residue polypeptide: RNA pyrophosphohydrolase (168 aa).

Positions 8-159 constitute a Nudix hydrolase domain; the sequence is PYRTCVGVML…KRPVYERVVK (152 aa). The Nudix box signature appears at 47–68; that stretch reads GGVDPGEDTWKAAKRELYEETS.

The protein belongs to the Nudix hydrolase family. RppH subfamily. A divalent metal cation is required as a cofactor.

Functionally, accelerates the degradation of transcripts by removing pyrophosphate from the 5'-end of triphosphorylated RNA, leading to a more labile monophosphorylated state that can stimulate subsequent ribonuclease cleavage. The protein is RNA pyrophosphohydrolase of Rhodopseudomonas palustris (strain ATCC BAA-98 / CGA009).